The sequence spans 206 residues: 2-phospho-L-lactate guanylyltransferase (206 aa).

It belongs to the CofC family. Homodimer.

It catalyses the reaction (2S)-2-phospholactate + GTP + H(+) = (2S)-lactyl-2-diphospho-5'-guanosine + diphosphate. The protein operates within cofactor biosynthesis; coenzyme F420 biosynthesis. In terms of biological role, guanylyltransferase that catalyzes the activation of (2S)-2-phospholactate (2-PL) as (2S)-lactyl-2-diphospho-5'-guanosine, via the condensation of 2-PL with GTP. It is involved in the biosynthesis of coenzyme F420, a hydride carrier cofactor. The protein is 2-phospho-L-lactate guanylyltransferase of Haloferax volcanii (strain ATCC 29605 / DSM 3757 / JCM 8879 / NBRC 14742 / NCIMB 2012 / VKM B-1768 / DS2) (Halobacterium volcanii).